Reading from the N-terminus, the 408-residue chain is Aspartokinase 2 (408 aa).

Residue 7-10 participates in ATP binding; that stretch reads KFGG. Residue 25–30 participates in substrate binding; it reads RAIAEK. Serine 41 lines the ATP pocket. Substrate is bound by residues 47 to 49, glutamate 74, 125 to 126, 150 to 153, and serine 153; these read TDE, LE, and RGGS. ATP contacts are provided by residues 173 to 174 and 179 to 184; these read TD and FTTDPR. 2 ACT domains span residues 264–337 and 343–408; these read VTIY…TESK and IVGS…PSAV. Residues 289-291, glutamine 295, 354-355, 368-369, and 375-376 contribute to the substrate site; these read NVD, VA, LI, and SE.

Belongs to the aspartokinase family. In terms of assembly, tetramer consisting of 2 isoforms Alpha (catalytic and regulation) and of a homodimer of 2 isoforms Beta (regulation).

The catalysed reaction is L-aspartate + ATP = 4-phospho-L-aspartate + ADP. It participates in amino-acid biosynthesis; L-lysine biosynthesis via DAP pathway; (S)-tetrahydrodipicolinate from L-aspartate: step 1/4. It functions in the pathway amino-acid biosynthesis; L-methionine biosynthesis via de novo pathway; L-homoserine from L-aspartate: step 1/3. Its pathway is amino-acid biosynthesis; L-threonine biosynthesis; L-threonine from L-aspartate: step 1/5. With respect to regulation, lysine-sensitive. Regulated by degradation in response to starvation of cells for various nutrients. Ammonium starvation induced the fastest aspartokinase II decline, followed by amino acid starvation and glucose limitation. In terms of biological role, catalyzes the phosphorylation of the beta-carboxyl group of aspartic acid with ATP to yield 4-phospho-L-aspartate, which is involved in the branched biosynthetic pathway leading to the biosynthesis of amino acids threonine, isoleucine and methionine. In Bacillus subtilis (strain 168), this protein is Aspartokinase 2 (lysC).